A 110-amino-acid chain; its full sequence is Ribonuclease P protein component 1 (110 aa).

Belongs to the eukaryotic/archaeal RNase P protein component 1 family. As to quaternary structure, consists of a catalytic RNA component and at least 4-5 protein subunits.

It localises to the cytoplasm. The catalysed reaction is Endonucleolytic cleavage of RNA, removing 5'-extranucleotides from tRNA precursor.. In terms of biological role, part of ribonuclease P, a protein complex that generates mature tRNA molecules by cleaving their 5'-ends. In Aeropyrum pernix (strain ATCC 700893 / DSM 11879 / JCM 9820 / NBRC 100138 / K1), this protein is Ribonuclease P protein component 1.